A 343-amino-acid chain; its full sequence is Beta-ketoacyl-[acyl-carrier-protein] synthase III 1 (343 aa).

Residues C122 and H268 contribute to the active site. The interval 269 to 273 (QANVR) is ACP-binding. Residue N299 is part of the active site.

The protein belongs to the thiolase-like superfamily. FabH family. In terms of assembly, homodimer.

The protein resides in the cytoplasm. The enzyme catalyses malonyl-[ACP] + acetyl-CoA + H(+) = 3-oxobutanoyl-[ACP] + CO2 + CoA. It functions in the pathway lipid metabolism; fatty acid biosynthesis. Essential enzyme that catalyzes the condensation reaction of fatty acid synthesis by the addition to an acyl acceptor of two carbons from malonyl-ACP. Catalyzes the first condensation reaction which initiates fatty acid synthesis and may therefore play a role in governing the total rate of fatty acid production. Possesses both acetoacetyl-ACP synthase and acetyl transacylase activities. Its substrate specificity determines the biosynthesis of branched-chain of fatty acids. This chain is Beta-ketoacyl-[acyl-carrier-protein] synthase III 1, found in Streptomyces coelicolor (strain ATCC BAA-471 / A3(2) / M145).